Reading from the N-terminus, the 119-residue chain is Fluoride-specific ion channel FluC 2 (119 aa).

Helical transmembrane passes span M1–I21, F33–S53, F56–S76, and V93–Y113. Residues G70 and T73 each contribute to the Na(+) site.

Belongs to the fluoride channel Fluc/FEX (TC 1.A.43) family.

It is found in the cell membrane. It carries out the reaction fluoride(in) = fluoride(out). Na(+) is not transported, but it plays an essential structural role and its presence is essential for fluoride channel function. Functionally, fluoride-specific ion channel. Important for reducing fluoride concentration in the cell, thus reducing its toxicity. This chain is Fluoride-specific ion channel FluC 2, found in Lactobacillus johnsonii (strain CNCM I-12250 / La1 / NCC 533).